Here is a 391-residue protein sequence, read N- to C-terminus: Phosphoglycerate kinase (391 aa).

Residues 21–23, Arg-36, 59–62, Arg-114, and Arg-147 each bind substrate; these read DLN and HLGR. Residues Lys-198, Glu-315, and 344-347 each bind ATP; that span reads GGDT.

Belongs to the phosphoglycerate kinase family. Monomer.

The protein resides in the cytoplasm. It catalyses the reaction (2R)-3-phosphoglycerate + ATP = (2R)-3-phospho-glyceroyl phosphate + ADP. The protein operates within carbohydrate degradation; glycolysis; pyruvate from D-glyceraldehyde 3-phosphate: step 2/5. The chain is Phosphoglycerate kinase from Actinobacillus pleuropneumoniae serotype 5b (strain L20).